The chain runs to 1187 residues: DNA-directed RNA polymerase subunit beta (1187 aa).

This sequence belongs to the RNA polymerase beta chain family. The RNAP catalytic core consists of 2 alpha, 1 beta, 1 beta' and 1 omega subunit. When a sigma factor is associated with the core the holoenzyme is formed, which can initiate transcription.

It carries out the reaction RNA(n) + a ribonucleoside 5'-triphosphate = RNA(n+1) + diphosphate. Its function is as follows. DNA-dependent RNA polymerase catalyzes the transcription of DNA into RNA using the four ribonucleoside triphosphates as substrates. In Streptococcus mutans serotype c (strain ATCC 700610 / UA159), this protein is DNA-directed RNA polymerase subunit beta.